The chain runs to 151 residues: CD-NTase-associated protein 19 (151 aa).

The next 3 helical transmembrane spans lie at 25–45, 52–72, and 127–147; these read TVFN…GVTL, VLFT…FWKL, and ISFV…FLMK.

It belongs to the Cap19 family.

Its subcellular location is the cell inner membrane. Membrane protein component of a CBASS (cyclic oligonucleotide-based antiphage signaling system) which provides immunity against bacteriophage. The CD-NTase protein synthesizes cyclic nucleotides in response to infection; these serve as specific second messenger signals. The signals activate a diverse range of effectors, leading to bacterial cell death and thus abortive phage infection. A type III CBASS system. Expression of this CBASS system (Cap17-CapW-CdnC-Cap7-Cap6-Cap18-Cap19) in a susceptible E.coli (strain JP313) confers resistance to bacteriophage lambda cI-. The sequence is that of CD-NTase-associated protein 19 from Escherichia coli.